Consider the following 481-residue polypeptide: MPAVMIQGTGSDVGKSLLVAGLCRAARRRGLSVAPFKPQNMSNNAAVTADGGEIGRAQALQARASGLEPLTDMNPVLLKPESDHGSQVIVQGRRVGTLRARDWFERKPALMAPVLESFARLTAAHDLVIVEGAGSPAEVNLRRGDIANMGFARTAGVPVVLAGDIDRGGVIAQLVGTQAVIDPEDAAMIAGFLVNKFRGDVRLFDEGYRLIEARTGWRGYGVVPFFPEAALLPAEDALDLGRPTGQGALTVAWLAFSRVANFDDLDPLKQEPGLTVRMVRPGQPIPAEADLVILPGTKSTRGDLAFLRAQGWDVDLRAHHRRGGRVLGICGGYQMLGRSVADPEGLEGAPGVTEGLGLLDVETVMHPDKRLTRVAGRHRASGAELTGYEIHIGATEGPDCARPFAEIEGRPEGATSADGRVVGSYLHGMFGADGFRRAFLESLGAATSDLAYDARVETVLDALADHLETHVDVAGLLALAR.

In terms of domain architecture, GATase cobBQ-type spans 248–435; that stretch reads ALTVAWLAFS…LHGMFGADGF (188 aa). Residue Cys330 is the Nucleophile of the active site. His427 is an active-site residue.

It belongs to the CobB/CobQ family. CobQ subfamily.

Its pathway is cofactor biosynthesis; adenosylcobalamin biosynthesis. Its function is as follows. Catalyzes amidations at positions B, D, E, and G on adenosylcobyrinic A,C-diamide. NH(2) groups are provided by glutamine, and one molecule of ATP is hydrogenolyzed for each amidation. The chain is Cobyric acid synthase from Cereibacter sphaeroides (strain ATCC 17023 / DSM 158 / JCM 6121 / CCUG 31486 / LMG 2827 / NBRC 12203 / NCIMB 8253 / ATH 2.4.1.) (Rhodobacter sphaeroides).